Consider the following 466-residue polypeptide: Serine/threonine-protein kinase SSN3 (466 aa).

The Protein kinase domain maps to 32–396; the sequence is YKILGFISSG…ARDALRHPWF (365 aa). 38-46 serves as a coordination point for ATP; that stretch reads ISSGTYGRV. Residues 58–105 are disordered; sequence ASAKSALPSSTRAALSLPKDKLPSPSFTEDSDPLNNPEMCMRPGDRPA. Residue Lys-114 participates in ATP binding. Asp-216 functions as the Proton acceptor in the catalytic mechanism. The disordered stretch occupies residues 421-466; the sequence is THEDNGDAKMGSLPQSMAGGRLPSSSNFRPASGNIVQPAARKKARI.

Belongs to the protein kinase superfamily. CMGC Ser/Thr protein kinase family. CDC2/CDKX subfamily. As to quaternary structure, component of the SRB8-11 complex, a regulatory module of the Mediator complex. Mg(2+) serves as cofactor.

Its subcellular location is the nucleus. The catalysed reaction is L-seryl-[protein] + ATP = O-phospho-L-seryl-[protein] + ADP + H(+). It carries out the reaction L-threonyl-[protein] + ATP = O-phospho-L-threonyl-[protein] + ADP + H(+). The enzyme catalyses [DNA-directed RNA polymerase] + ATP = phospho-[DNA-directed RNA polymerase] + ADP + H(+). In terms of biological role, component of the SRB8-11 complex. The SRB8-11 complex is a regulatory module of the Mediator complex which is itself involved in regulation of basal and activated RNA polymerase II-dependent transcription. The SRB8-11 complex may be involved in the transcriptional repression of a subset of genes regulated by Mediator. It may inhibit the association of the Mediator complex with RNA polymerase II to form the holoenzyme complex. The SRB8-11 complex phosphorylates the C-terminal domain (CTD) of the largest subunit of RNA polymerase II. The chain is Serine/threonine-protein kinase SSN3 (SSN3) from Cryptococcus neoformans var. neoformans serotype D (strain B-3501A) (Filobasidiella neoformans).